The primary structure comprises 423 residues: Anhydromevalonate phosphate decarboxylase (423 aa).

Mn(2+) contacts are provided by Asn-134 and Glu-197. Asp-245 acts as the Proton acceptor in catalysis.

Belongs to the UbiD family. The cofactor is prenylated FMN. It depends on Mn(2+) as a cofactor.

The catalysed reaction is (2E)-3-methyl-5-phosphooxypent-2-enoate + H(+) = isopentenyl phosphate + CO2. It functions in the pathway isoprenoid biosynthesis; isopentenyl diphosphate biosynthesis via mevalonate pathway. Functionally, catalyzes the conversion of trans-anhydromevalonate 5-phosphate (tAHMP) into isopentenyl phosphate. Involved in the archaeal mevalonate (MVA) pathway, which provides fundamental precursors for isoprenoid biosynthesis, such as isopentenyl diphosphate (IPP) and dimethylallyl diphosphate (DMAPP). This is Anhydromevalonate phosphate decarboxylase from Methanothermobacter thermautotrophicus (strain ATCC 29096 / DSM 1053 / JCM 10044 / NBRC 100330 / Delta H) (Methanobacterium thermoautotrophicum).